The chain runs to 251 residues: Small ribosomal subunit protein uS2 (251 aa).

The protein belongs to the universal ribosomal protein uS2 family.

The protein is Small ribosomal subunit protein uS2 of Synechococcus sp. (strain ATCC 27144 / PCC 6301 / SAUG 1402/1) (Anacystis nidulans).